The primary structure comprises 177 residues: Acireductone dioxygenase (177 aa).

Residues His-97, His-99, Glu-103, and His-141 each contribute to the Fe(2+) site. Residues His-97, His-99, Glu-103, and His-141 each contribute to the Ni(2+) site.

This sequence belongs to the acireductone dioxygenase (ARD) family. In terms of assembly, monomer. Fe(2+) is required as a cofactor. Ni(2+) serves as cofactor.

It catalyses the reaction 1,2-dihydroxy-5-(methylsulfanyl)pent-1-en-3-one + O2 = 3-(methylsulfanyl)propanoate + CO + formate + 2 H(+). The enzyme catalyses 1,2-dihydroxy-5-(methylsulfanyl)pent-1-en-3-one + O2 = 4-methylsulfanyl-2-oxobutanoate + formate + 2 H(+). It participates in amino-acid biosynthesis; L-methionine biosynthesis via salvage pathway; L-methionine from S-methyl-5-thio-alpha-D-ribose 1-phosphate: step 5/6. Catalyzes 2 different reactions between oxygen and the acireductone 1,2-dihydroxy-3-keto-5-methylthiopentene (DHK-MTPene) depending upon the metal bound in the active site. Fe-containing acireductone dioxygenase (Fe-ARD) produces formate and 2-keto-4-methylthiobutyrate (KMTB), the alpha-ketoacid precursor of methionine in the methionine recycle pathway. Ni-containing acireductone dioxygenase (Ni-ARD) produces methylthiopropionate, carbon monoxide and formate, and does not lie on the methionine recycle pathway. The chain is Acireductone dioxygenase from Leptospira biflexa serovar Patoc (strain Patoc 1 / ATCC 23582 / Paris).